We begin with the raw amino-acid sequence, 96 residues long: Nucleoid-associated protein TC_0612 (96 aa).

It belongs to the YbaB/EbfC family. As to quaternary structure, homodimer.

The protein resides in the cytoplasm. The protein localises to the nucleoid. Its function is as follows. Binds to DNA and alters its conformation. May be involved in regulation of gene expression, nucleoid organization and DNA protection. The sequence is that of Nucleoid-associated protein TC_0612 from Chlamydia muridarum (strain MoPn / Nigg).